The chain runs to 297 residues: Large ribosomal subunit protein uL18 (297 aa).

Gly2 bears the N-acetylglycine mark. An N6-acetyllysine mark is found at Lys5 and Lys48. At Ser185 the chain carries Phosphoserine. At Lys220 the chain carries N6-acetyllysine; alternate. A Glycyl lysine isopeptide (Lys-Gly) (interchain with G-Cter in SUMO1); alternate cross-link involves residue Lys220. Lys220 is covalently cross-linked (Glycyl lysine isopeptide (Lys-Gly) (interchain with G-Cter in SUMO2); alternate). At Thr232 the chain carries Phosphothreonine. Residues 252–297 (VYEKKPKKEVKKKRWNRPKMSLAQKKDRVAQKKASFLRAQERAAES) form a disordered region. A compositionally biased stretch (basic residues) spans 258 to 268 (KKEVKKKRWNR). Phosphoserine is present on Ser272.

It belongs to the universal ribosomal protein uL18 family. As to quaternary structure, component of the large ribosomal subunit (LSU). Part of the 5S RNP complex, which is a LSU subcomplex composed of the 5S RNA, RPL5 and RPL11. Component of a hexameric 5S RNP precursor complex, composed of 5S RNA, RRS1, RPF2/BXDC1, RPL5, RPL11 and HEATR3; this complex acts as a precursor for ribosome assembly. Interacts with NVL in an ATP-dependent manner. Interacts with RRP1B. Interacts with IPO5, IPO7 and KPNB1; these interactions may be involved in RPL5 nuclear import for the assembly of ribosomal subunits.

It is found in the cytoplasm. Its subcellular location is the nucleus. The protein localises to the nucleolus. Functionally, component of the ribosome, a large ribonucleoprotein complex responsible for the synthesis of proteins in the cell. The small ribosomal subunit (SSU) binds messenger RNAs (mRNAs) and translates the encoded message by selecting cognate aminoacyl-transfer RNA (tRNA) molecules. The large subunit (LSU) contains the ribosomal catalytic site termed the peptidyl transferase center (PTC), which catalyzes the formation of peptide bonds, thereby polymerizing the amino acids delivered by tRNAs into a polypeptide chain. The nascent polypeptides leave the ribosome through a tunnel in the LSU and interact with protein factors that function in enzymatic processing, targeting, and the membrane insertion of nascent chains at the exit of the ribosomal tunnel. As part of the 5S RNP/5S ribonucleoprotein particle it is an essential component of the LSU, required for its formation and the maturation of rRNAs. It also couples ribosome biogenesis to p53/TP53 activation. As part of the 5S RNP it accumulates in the nucleoplasm and inhibits MDM2, when ribosome biogenesis is perturbed, mediating the stabilization and the activation of TP53. The protein is Large ribosomal subunit protein uL18 (RPL5) of Bos taurus (Bovine).